A 123-amino-acid chain; its full sequence is Small ribosomal subunit protein uS12 (123 aa).

Asp89 is modified (3-methylthioaspartic acid).

The protein belongs to the universal ribosomal protein uS12 family. Part of the 30S ribosomal subunit. Contacts proteins S8 and S17. May interact with IF1 in the 30S initiation complex.

Its function is as follows. With S4 and S5 plays an important role in translational accuracy. Functionally, interacts with and stabilizes bases of the 16S rRNA that are involved in tRNA selection in the A site and with the mRNA backbone. Located at the interface of the 30S and 50S subunits, it traverses the body of the 30S subunit contacting proteins on the other side and probably holding the rRNA structure together. The combined cluster of proteins S8, S12 and S17 appears to hold together the shoulder and platform of the 30S subunit. The polypeptide is Small ribosomal subunit protein uS12 (Bradyrhizobium diazoefficiens (strain JCM 10833 / BCRC 13528 / IAM 13628 / NBRC 14792 / USDA 110)).